The following is a 69-amino-acid chain: Putative membrane protein insertion efficiency factor (69 aa).

It belongs to the UPF0161 family.

The protein localises to the cell membrane. Its function is as follows. Could be involved in insertion of integral membrane proteins into the membrane. The chain is Putative membrane protein insertion efficiency factor from Caldanaerobacter subterraneus subsp. tengcongensis (strain DSM 15242 / JCM 11007 / NBRC 100824 / MB4) (Thermoanaerobacter tengcongensis).